Consider the following 388-residue polypeptide: Formate-dependent phosphoribosylglycinamide formyltransferase (388 aa).

N(1)-(5-phospho-beta-D-ribosyl)glycinamide contacts are provided by residues 15 to 16 and Glu75; that span reads EL. ATP contacts are provided by residues Arg107, Lys148, 153-158, 188-191, and Glu196; these read SSGKGQ and EEFL. Residues 112-302 form the ATP-grasp domain; it reads DLAAGELALR…EFELHLRAVL (191 aa). Positions 261 and 273 each coordinate Mg(2+). Residues Asp280, Lys350, and 357 to 358 each bind N(1)-(5-phospho-beta-D-ribosyl)glycinamide; that span reads RR.

This sequence belongs to the PurK/PurT family. As to quaternary structure, homodimer.

The enzyme catalyses N(1)-(5-phospho-beta-D-ribosyl)glycinamide + formate + ATP = N(2)-formyl-N(1)-(5-phospho-beta-D-ribosyl)glycinamide + ADP + phosphate + H(+). It functions in the pathway purine metabolism; IMP biosynthesis via de novo pathway; N(2)-formyl-N(1)-(5-phospho-D-ribosyl)glycinamide from N(1)-(5-phospho-D-ribosyl)glycinamide (formate route): step 1/1. Its function is as follows. Involved in the de novo purine biosynthesis. Catalyzes the transfer of formate to 5-phospho-ribosyl-glycinamide (GAR), producing 5-phospho-ribosyl-N-formylglycinamide (FGAR). Formate is provided by PurU via hydrolysis of 10-formyl-tetrahydrofolate. The protein is Formate-dependent phosphoribosylglycinamide formyltransferase of Parasynechococcus marenigrum (strain WH8102).